Here is a 205-residue protein sequence, read N- to C-terminus: Small ribosomal subunit protein uS2 (205 aa).

It belongs to the universal ribosomal protein uS2 family.

The polypeptide is Small ribosomal subunit protein uS2 (rps2) (Aeropyrum pernix (strain ATCC 700893 / DSM 11879 / JCM 9820 / NBRC 100138 / K1)).